A 480-amino-acid chain; its full sequence is Glutamate--tRNA ligase (480 aa).

The 'HIGH' region motif lies at 9–19; it reads PSPTGNLHIGT. The 'KMSKS' region signature appears at 250–254; it reads KLSKR. Lys253 is an ATP binding site.

The protein belongs to the class-I aminoacyl-tRNA synthetase family. Glutamate--tRNA ligase type 1 subfamily. As to quaternary structure, monomer.

It localises to the cytoplasm. The catalysed reaction is tRNA(Glu) + L-glutamate + ATP = L-glutamyl-tRNA(Glu) + AMP + diphosphate. Its function is as follows. Catalyzes the attachment of glutamate to tRNA(Glu) in a two-step reaction: glutamate is first activated by ATP to form Glu-AMP and then transferred to the acceptor end of tRNA(Glu). The chain is Glutamate--tRNA ligase from Microcystis aeruginosa (strain NIES-843 / IAM M-2473).